The following is a 317-amino-acid chain: L-lactate dehydrogenase (317 aa).

Residues valine 17, aspartate 38, lysine 43, tyrosine 69, and 83–84 each bind NAD(+); that span reads GA. Glutamine 86 and arginine 92 together coordinate substrate. NAD(+) is bound by residues serine 105, 122–124, and serine 147; that span reads ATN. Substrate is bound at residue 124–127; the sequence is NPVD. Residue 152–155 participates in substrate binding; sequence DSAR. Arginine 157 and histidine 172 together coordinate beta-D-fructose 1,6-bisphosphate. The Proton acceptor role is filled by histidine 179. Phosphotyrosine is present on tyrosine 224. Residue threonine 233 coordinates substrate.

The protein belongs to the LDH/MDH superfamily. LDH family. As to quaternary structure, homotetramer.

The protein localises to the cytoplasm. It carries out the reaction (S)-lactate + NAD(+) = pyruvate + NADH + H(+). The protein operates within fermentation; pyruvate fermentation to lactate; (S)-lactate from pyruvate: step 1/1. Its activity is regulated as follows. Allosterically activated by fructose 1,6-bisphosphate (FBP). Its function is as follows. Catalyzes the conversion of lactate to pyruvate. The chain is L-lactate dehydrogenase from Bacillus velezensis (strain DSM 23117 / BGSC 10A6 / LMG 26770 / FZB42) (Bacillus amyloliquefaciens subsp. plantarum).